The primary structure comprises 643 residues: Fructose-1,6-bisphosphatase class 3 (643 aa).

Belongs to the FBPase class 3 family. Requires Mn(2+) as cofactor.

The enzyme catalyses beta-D-fructose 1,6-bisphosphate + H2O = beta-D-fructose 6-phosphate + phosphate. The protein operates within carbohydrate biosynthesis; gluconeogenesis. This is Fructose-1,6-bisphosphatase class 3 from Lacticaseibacillus casei (strain BL23) (Lactobacillus casei).